A 337-amino-acid chain; its full sequence is Tryptophan--tRNA ligase (337 aa).

ATP-binding positions include 9–11 and 17–18; these read RPT and GH. Positions 10–18 match the 'HIGH' region motif; the sequence is PTGRLHLGH. Asp-137 is an L-tryptophan binding site. ATP is bound by residues 149–151, Leu-187, and 195–199; these read GKD and KMSKS. The short motif at 195–199 is the 'KMSKS' region element; that stretch reads KMSKS.

It belongs to the class-I aminoacyl-tRNA synthetase family. In terms of assembly, homodimer.

The protein resides in the cytoplasm. It catalyses the reaction tRNA(Trp) + L-tryptophan + ATP = L-tryptophyl-tRNA(Trp) + AMP + diphosphate + H(+). Its function is as follows. Catalyzes the attachment of tryptophan to tRNA(Trp). The sequence is that of Tryptophan--tRNA ligase from Treponema pallidum (strain Nichols).